Here is a 222-residue protein sequence, read N- to C-terminus: UPF0758 protein CT0611 (222 aa).

The 123-residue stretch at 100-222 folds into the MPN domain; it reads KVKGARDVFE…WFSFRDHALL (123 aa). Zn(2+) is bound by residues histidine 171, histidine 173, and aspartate 184. Positions 171–184 match the JAMM motif motif; that stretch reads HNHPSGDVQPSNAD.

It belongs to the UPF0758 family.

The sequence is that of UPF0758 protein CT0611 from Chlorobaculum tepidum (strain ATCC 49652 / DSM 12025 / NBRC 103806 / TLS) (Chlorobium tepidum).